The chain runs to 170 residues: MESRSKPQFLAILTLFSVLFSQSLAWPLYGPPSSVRLDDRLQFEGAGDPDQVSLKADSDILQNALAENDTPYYDVSRNARHADGVFTSDYSRLLGQISAKKYLESLIGKRISSSISEDPVPVKRHSDAVFTDNYTRLRKQMAVKKYLNSILNGKRSSEGDSPDFLEELEK.

An N-terminal signal peptide occupies residues 1–21 (MESRSKPQFLAILTLFSVLFS). The propeptide occupies 22 to 79 (QSLAWPLYGPPSSVRLDDRLQFEGAGDPDQVSLKADSDILQNALAENDTPYYDVSRNA). The residue at position 76 (S76) is a Phosphoserine. An Isoleucine amide modification is found at I107. N-linked (GlcNAc...) asparagine glycosylation occurs at N133. N152 is subject to Asparagine amide. The propeptide occupies 156–170 (SSEGDSPDFLEELEK).

Belongs to the glucagon family.

Its subcellular location is the secreted. VIP is a neuropeptide involved in a diverse array of physiological processes through activating the PACAP subfamily of class B1 G protein-coupled receptors: VIP receptor 1 (VPR1) and VIP receptor 2 (VPR2). Abundantly expressed throughout the CNS and peripheral nervous systems where they primarily exert neuroprotective and immune modulatory roles. Also causes vasodilation, lowers arterial blood pressure, stimulates myocardial contractility, increases glycogenolysis and relaxes the smooth muscle of trachea, stomach and gall bladder. Its function is as follows. PHM-27 and PHV-42 are two bioactive forms from proteolysis of the same precursor protein, that cause vasodilation. PHM-27 is a potent agonist of the calcitonin receptor CALCR, with similar efficacy as calcitonin. The protein is VIP peptides (Vip) of Rattus norvegicus (Rat).